A 679-amino-acid chain; its full sequence is Leucine-rich repeat, immunoglobulin-like domain and transmembrane domain-containing protein 3 (679 aa).

The signal sequence occupies residues 1-19 (MHLFACLCIVLSFLEGVGC). The Lumenal segment spans residues 20 to 582 (LCPSQCTCDY…RVEGDDSQWS (563 aa)). 5 LRR repeats span residues 56–79 (PVDTVKLRIEKTVIRRISAEAFYY), 80–103 (LVELQYLWVTYNSVASIDPSSFYN), 104–128 (LKQLHELRLDGNSLAAFPWASLLDM), 129–151 (PLLRTLDLHNNKITSVPNEALRY), and 152–175 (LKNLAYLDLSSNRLTTLPPDFLES). Residues 201 to 253 (NPWFCDCHISKMIELSKVVDPAIVLLDPLMTCSEPERLTGILFQRAELEHCLK) enclose the LRRCT domain. One can recognise an Ig-like domain in the interval 254 to 344 (PSVMTSATKI…GMSEAVVTVT (91 aa)). A disulfide bond links cysteine 275 and cysteine 328. The N-linked (GlcNAc...) asparagine glycan is linked to asparagine 296. Positions 351 to 375 (TPIPPDTSERTGDHPEWDVQPGSGR) are disordered. Residues 357-367 (TSERTGDHPEW) show a composition bias toward basic and acidic residues. One can recognise a Fibronectin type-III domain in the interval 486–574 (AIENLRVVSE…QCITFSTERV (89 aa)). A helical transmembrane segment spans residues 583 to 603 (LLLVVTSTACVVILPLICFLL). Over 604–679 (YKVCKLQCKS…SEGSRPEYYC (76 aa)) the chain is Cytoplasmic.

In terms of processing, glycosylated. Detected in the outer plexiform layer (OPL) of the retina where it localizes to ON-bipolar cells (at protein level).

Its subcellular location is the cell projection. The protein resides in the dendrite. It is found in the perikaryon. The protein localises to the endoplasmic reticulum membrane. Functionally, plays a role in the synapse formation and synaptic transmission between cone photoreceptor cells and retinal bipolar cells. Required for normal transmission of a light-evoked stimulus from the cone photoreceptor cells to the ON-bipolar cells and ON-ganglion cells in the inner retina. Required in retinal ON-bipolar cells for normal localization of the cation channel TRPM1 at dendrite tips. Seems to play a specific role in synaptic contacts made by ON-bipolar cells with cone photoreceptor pedicles. May also have a role in cone synapse formation. Might facilitate FGFR1 exit from the endoplasmic reticulum to the Golgi. Could be a regulator of the FGFRs. This Homo sapiens (Human) protein is Leucine-rich repeat, immunoglobulin-like domain and transmembrane domain-containing protein 3 (LRIT3).